A 193-amino-acid polypeptide reads, in one-letter code: dCTP deaminase (193 aa).

DCTP is bound by residues 110–115 (RSSLAR), D128, 136–138 (VLE), Y171, K178, and Q182. E138 functions as the Proton donor/acceptor in the catalytic mechanism.

It belongs to the dCTP deaminase family. Homotrimer.

The catalysed reaction is dCTP + H2O + H(+) = dUTP + NH4(+). The protein operates within pyrimidine metabolism; dUMP biosynthesis; dUMP from dCTP (dUTP route): step 1/2. Catalyzes the deamination of dCTP to dUTP. The polypeptide is dCTP deaminase (Aeromonas salmonicida (strain A449)).